The following is a 373-amino-acid chain: Spermidine/putrescine import ATP-binding protein PotA (373 aa).

The ABC transporter domain maps to 5 to 235 (IVFEHVSKKF…PKSSFVADFI (231 aa)). Residue 37–44 (GPSGCGKT) coordinates ATP.

This sequence belongs to the ABC transporter superfamily. Spermidine/putrescine importer (TC 3.A.1.11.1) family. In terms of assembly, the complex is composed of two ATP-binding proteins (PotA), two transmembrane proteins (PotB and PotC) and a solute-binding protein (PotD).

The protein resides in the cell inner membrane. The enzyme catalyses ATP + H2O + polyamine-[polyamine-binding protein]Side 1 = ADP + phosphate + polyamineSide 2 + [polyamine-binding protein]Side 1.. Part of the ABC transporter complex PotABCD involved in spermidine/putrescine import. Responsible for energy coupling to the transport system. This chain is Spermidine/putrescine import ATP-binding protein PotA, found in Protochlamydia amoebophila (strain UWE25).